The primary structure comprises 115 residues: MQPKSISLLQKIDSIIETIIVKFTNIFENLQDANKTTEILSMESLAMENNCIQIIRLCQDLISISRNLKEIWVLNSIKVTQEKFEWKQEEIDIMFTQFNLLTDKIAEFETDMNKE.

It belongs to the Mediator complex subunit 22 family. In terms of assembly, component of the Mediator complex.

The protein localises to the nucleus. Its function is as follows. Component of the Mediator complex, a coactivator involved in the regulated transcription of nearly all RNA polymerase II-dependent genes. Mediator functions as a bridge to convey information from gene-specific regulatory proteins to the basal RNA polymerase II transcription machinery. Mediator is recruited to promoters by direct interactions with regulatory proteins and serves as a scaffold for the assembly of a functional preinitiation complex with RNA polymerase II and the general transcription factors. This chain is Mediator of RNA polymerase II transcription subunit 22 (SRB6), found in Candida albicans (strain SC5314 / ATCC MYA-2876) (Yeast).